Here is a 78-residue protein sequence, read N- to C-terminus: Large ribosomal subunit protein eL20 (78 aa).

This sequence belongs to the eukaryotic ribosomal protein eL20 family. In terms of assembly, part of the 50S ribosomal subunit. Binds 23S rRNA.

The chain is Large ribosomal subunit protein eL20 from Thermococcus sibiricus (strain DSM 12597 / MM 739).